The primary structure comprises 263 residues: Small ribosomal subunit protein uS2 (263 aa).

The segment at 223–246 (KSLLEQDSDANADEAEVSQEEKDA) is disordered. Acidic residues predominate over residues 228–240 (QDSDANADEAEVS).

Belongs to the universal ribosomal protein uS2 family.

The chain is Small ribosomal subunit protein uS2 from Campylobacter curvus (strain 525.92).